A 500-amino-acid chain; its full sequence is Hepatic triacylglycerol lipase (500 aa).

Positions M1–A21 are cleaved as a signal peptide. The disordered stretch occupies residues G23–P44. N-linked (GlcNAc...) asparagine glycosylation is found at N67 and N78. The Nucleophile role is filled by S168. The Charge relay system role is filled by D194. Residues C254–C277 are essential for determining substrate specificity. The active-site Charge relay system is the H279. In terms of domain architecture, PLAT spans Y353–R487. N-linked (GlcNAc...) asparagine glycans are attached at residues N363 and N398.

Belongs to the AB hydrolase superfamily. Lipase family. As to quaternary structure, homodimer.

The protein resides in the secreted. It catalyses the reaction a triacylglycerol + H2O = a diacylglycerol + a fatty acid + H(+). The enzyme catalyses a 1-acyl-sn-glycero-3-phosphocholine + H2O = sn-glycerol 3-phosphocholine + a fatty acid + H(+). The catalysed reaction is a 1,2-diacyl-sn-glycero-3-phosphocholine + H2O = a 2-acyl-sn-glycero-3-phosphocholine + a fatty acid + H(+). It carries out the reaction 1,2,3-tri-(9Z-octadecenoyl)-glycerol + H2O = di-(9Z)-octadecenoylglycerol + (9Z)-octadecenoate + H(+). It catalyses the reaction 1,2-di-(9Z-octadecenoyl)-sn-glycero-3-phosphocholine + H2O = (9Z-octadecenoyl)-sn-glycero-3-phosphocholine + (9Z)-octadecenoate + H(+). The enzyme catalyses 1,2,3-tributanoylglycerol + H2O = dibutanoylglycerol + butanoate + H(+). The catalysed reaction is 1,2-dihexadecanoyl-sn-glycero-3-phosphocholine + H2O = hexadecanoyl-sn-glycero-3-phosphocholine + hexadecanoate + H(+). It carries out the reaction 1,2-di-(9Z-octadecenoyl)-sn-glycerol + H2O = 2-(9Z-octadecenoyl)-glycerol + (9Z)-octadecenoate + H(+). It catalyses the reaction 1,2,3-tri-(9Z-octadecenoyl)-glycerol + H2O = 2,3-di-(9Z)-octadecenoyl-sn-glycerol + (9Z)-octadecenoate + H(+). The enzyme catalyses 1-(9Z-octadecenoyl)-sn-glycero-3-phospho-L-serine + H2O = sn-glycero-3-phospho-L-serine + (9Z)-octadecenoate + H(+). The catalysed reaction is 1-hexadecanoyl-sn-glycero-3-phosphocholine + H2O = sn-glycerol 3-phosphocholine + hexadecanoate + H(+). It carries out the reaction 1,3-di-(9Z-octadecenoyl)-glycerol + H2O = 3-(9Z-octadecenoyl)-sn-glycerol + (9Z)-octadecenoate + H(+). Functionally, catalyzes the hydrolysis of triglycerides and phospholipids present in circulating plasma lipoproteins, including chylomicrons, intermediate density lipoproteins (IDL), low density lipoproteins (LDL) of large size and high density lipoproteins (HDL), releasing free fatty acids (FFA) and smaller lipoprotein particles. Also exhibits lysophospholipase activity. Can hydrolyze both neutral lipid and phospholipid substrates but shows a greater binding affinity for neutral lipid substrates than phospholipid substrates. In native LDL, preferentially hydrolyzes the phosphatidylcholine species containing polyunsaturated fatty acids at sn-2 position. In Bos taurus (Bovine), this protein is Hepatic triacylglycerol lipase (LIPC).